The following is a 248-amino-acid chain: 1-(5-phosphoribosyl)-5-[(5-phosphoribosylamino)methylideneamino] imidazole-4-carboxamide isomerase (248 aa).

Catalysis depends on aspartate 8, which acts as the Proton acceptor. The active-site Proton donor is the aspartate 129.

Belongs to the HisA/HisF family.

The protein localises to the cytoplasm. The catalysed reaction is 1-(5-phospho-beta-D-ribosyl)-5-[(5-phospho-beta-D-ribosylamino)methylideneamino]imidazole-4-carboxamide = 5-[(5-phospho-1-deoxy-D-ribulos-1-ylimino)methylamino]-1-(5-phospho-beta-D-ribosyl)imidazole-4-carboxamide. It functions in the pathway amino-acid biosynthesis; L-histidine biosynthesis; L-histidine from 5-phospho-alpha-D-ribose 1-diphosphate: step 4/9. This Desulfitobacterium hafniense (strain Y51) protein is 1-(5-phosphoribosyl)-5-[(5-phosphoribosylamino)methylideneamino] imidazole-4-carboxamide isomerase.